Consider the following 189-residue polypeptide: Pyridoxal 5'-phosphate synthase subunit PdxT (189 aa).

L-glutamine is bound at residue 47 to 49 (GES). The Nucleophile role is filled by cysteine 79. Residues arginine 105 and 132–133 (IR) contribute to the L-glutamine site. Active-site charge relay system residues include histidine 168 and glutamate 170.

The protein belongs to the glutaminase PdxT/SNO family. As to quaternary structure, in the presence of PdxS, forms a dodecamer of heterodimers. Only shows activity in the heterodimer.

The enzyme catalyses aldehydo-D-ribose 5-phosphate + D-glyceraldehyde 3-phosphate + L-glutamine = pyridoxal 5'-phosphate + L-glutamate + phosphate + 3 H2O + H(+). It carries out the reaction L-glutamine + H2O = L-glutamate + NH4(+). It participates in cofactor biosynthesis; pyridoxal 5'-phosphate biosynthesis. In terms of biological role, catalyzes the hydrolysis of glutamine to glutamate and ammonia as part of the biosynthesis of pyridoxal 5'-phosphate. The resulting ammonia molecule is channeled to the active site of PdxS. The sequence is that of Pyridoxal 5'-phosphate synthase subunit PdxT from Methanocorpusculum labreanum (strain ATCC 43576 / DSM 4855 / Z).